The following is a 180-amino-acid chain: ATP synthase subunit delta (180 aa).

The protein belongs to the ATPase delta chain family. As to quaternary structure, F-type ATPases have 2 components, F(1) - the catalytic core - and F(0) - the membrane proton channel. F(1) has five subunits: alpha(3), beta(3), gamma(1), delta(1), epsilon(1). F(0) has three main subunits: a(1), b(2) and c(10-14). The alpha and beta chains form an alternating ring which encloses part of the gamma chain. F(1) is attached to F(0) by a central stalk formed by the gamma and epsilon chains, while a peripheral stalk is formed by the delta and b chains.

It is found in the cell inner membrane. Functionally, f(1)F(0) ATP synthase produces ATP from ADP in the presence of a proton or sodium gradient. F-type ATPases consist of two structural domains, F(1) containing the extramembraneous catalytic core and F(0) containing the membrane proton channel, linked together by a central stalk and a peripheral stalk. During catalysis, ATP synthesis in the catalytic domain of F(1) is coupled via a rotary mechanism of the central stalk subunits to proton translocation. Its function is as follows. This protein is part of the stalk that links CF(0) to CF(1). It either transmits conformational changes from CF(0) to CF(1) or is implicated in proton conduction. The chain is ATP synthase subunit delta from Chlorobium phaeobacteroides (strain BS1).